A 379-amino-acid polypeptide reads, in one-letter code: ATPase ASNA1 homolog (379 aa).

The tract at residues 1-20 (MSEDESNSVSCSLSLESDGY) is disordered. Residues 7–18 (NSVSCSLSLESD) show a composition bias toward low complexity. Residue 46-53 (KGGVGKTT) participates in ATP binding. Asp-75 is a catalytic residue. Residues Glu-246 and Asn-273 each coordinate ATP.

This sequence belongs to the arsA ATPase family. Homodimer.

It localises to the cytoplasm. Its subcellular location is the endoplasmic reticulum. Its function is as follows. ATPase required for the post-translational delivery of tail-anchored (TA) proteins to the endoplasmic reticulum. Recognizes and selectively binds the transmembrane domain of TA proteins in the cytosol. This complex then targets to the endoplasmic reticulum by membrane-bound receptors, where the tail-anchored protein is released for insertion. This process is regulated by ATP binding and hydrolysis. ATP binding drives the homodimer towards the closed dimer state, facilitating recognition of newly synthesized TA membrane proteins. ATP hydrolysis is required for insertion. Subsequently, the homodimer reverts towards the open dimer state, lowering its affinity for the membrane-bound receptor, and returning it to the cytosol to initiate a new round of targeting. The polypeptide is ATPase ASNA1 homolog (Plasmodium falciparum (isolate 3D7)).